A 137-amino-acid chain; its full sequence is Small ribosomal subunit protein uS12 (137 aa).

The disordered stretch occupies residues 1 to 57 (MPTINQLVRKPRRAQVTKSKSPAMNVGYNSRKKVQTKLASPQKRGVATRVGTMTPKK). Residue Asp102 is modified to 3-methylthioaspartic acid.

This sequence belongs to the universal ribosomal protein uS12 family. Part of the 30S ribosomal subunit. Contacts proteins S8 and S17. May interact with IF1 in the 30S initiation complex.

In terms of biological role, with S4 and S5 plays an important role in translational accuracy. Functionally, interacts with and stabilizes bases of the 16S rRNA that are involved in tRNA selection in the A site and with the mRNA backbone. Located at the interface of the 30S and 50S subunits, it traverses the body of the 30S subunit contacting proteins on the other side and probably holding the rRNA structure together. The combined cluster of proteins S8, S12 and S17 appears to hold together the shoulder and platform of the 30S subunit. The polypeptide is Small ribosomal subunit protein uS12 (Lactococcus lactis subsp. lactis (strain IL1403) (Streptococcus lactis)).